Consider the following 316-residue polypeptide: Melanocyte-stimulating hormone receptor (316 aa).

The Extracellular portion of the chain corresponds to 1–37 (MPMQGAQRKLLGSLNSTPTATSNLGLAANHTGAPCLE). The N-linked (GlcNAc...) asparagine glycan is linked to Asn29. A helical transmembrane segment spans residues 38-63 (VSIPDGLFLSLGLVSLVENMLVVAAI). The Cytoplasmic portion of the chain corresponds to 64–72 (AKNRNLHSP). Residues 73–93 (MYCFICCLALSDLLVSGSNML) traverse the membrane as a helical segment. The Extracellular segment spans residues 94 to 118 (ETAVVVLLEAGALATRASVVQQLHN). Residues 119–140 (TIDVLTYSSMLCSLCFVGAIAV) form a helical membrane-spanning segment. The Cytoplasmic portion of the chain corresponds to 141–163 (DRYISIFYALRYHSIMTLPRVQR). A helical membrane pass occupies residues 164–183 (VIAAIWVASVTSSTLFITYY). Residues 184–191 (EHVVALLC) lie on the Extracellular side of the membrane. The chain crosses the membrane as a helical span at residues 192 to 210 (LVVFLTMLVLMAVLYVHML). Residues 211–239 (ARACQHAQGITRLHKRQPPAHQGFGLRGA) lie on the Cytoplasmic side of the membrane. The chain crosses the membrane as a helical span at residues 240-265 (ATLTILLGIFFLCWGPFFLHLTLVVF). Residues 266-278 (CPQHLTCSCIFKN) are Extracellular-facing. A helical transmembrane segment spans residues 279–299 (FKVFLTLIICNTIIDPLIYAF). The Cytoplasmic segment spans residues 300 to 316 (RSQELCRTLKEVLLCSW). A lipid anchor (S-palmitoyl cysteine) is attached at Cys314.

This sequence belongs to the G-protein coupled receptor 1 family. As to quaternary structure, interacts with MGRN1, but does not undergo MGRN1-mediated ubiquitination; this interaction competes with GNAS-binding and thus inhibits agonist-induced cAMP production. Interacts with OPN3; the interaction results in a decrease in MC1R-mediated cAMP signaling and ultimately a decrease in melanin production in melanocytes.

Its subcellular location is the cell membrane. Its function is as follows. Receptor for MSH (alpha, beta and gamma) and ACTH. The activity of this receptor is mediated by G proteins which activate adenylate cyclase. Mediates melanogenesis, the production of eumelanin (black/brown) and phaeomelanin (red/yellow), via regulation of cAMP signaling in melanocytes. The chain is Melanocyte-stimulating hormone receptor (MC1R) from Cebus albifrons (White-fronted capuchin).